We begin with the raw amino-acid sequence, 637 residues long: Multicopper oxidase LPR1 homolog 5 (637 aa).

The first 21 residues, 1–21, serve as a signal peptide directing secretion; sequence MSPRIQQLAAVLLAAVVVVAA. An N-linked (GlcNAc...) asparagine glycan is attached at asparagine 100. Cu cation contacts are provided by histidine 209 and histidine 211. An N-linked (GlcNAc...) asparagine glycan is attached at asparagine 234. Cu cation contacts are provided by histidine 257 and histidine 259. 6 N-linked (GlcNAc...) asparagine glycosylation sites follow: asparagine 308, asparagine 349, asparagine 357, asparagine 425, asparagine 482, and asparagine 516. The 73-residue stretch at 334-406 folds into the Plastocyanin-like domain; that stretch reads PYLSVQRRRY…IVDFSRLPAA (73 aa). Histidine 522, histidine 525, and histidine 527 together coordinate Cu cation. N-linked (GlcNAc...) asparagine glycosylation is present at asparagine 553. Cu cation-binding residues include histidine 618, cysteine 619, histidine 620, histidine 624, and methionine 629.

Belongs to the multicopper oxidase family. It depends on Cu cation as a cofactor. Highly expressed in roots and basal stems.

It is found in the endoplasmic reticulum membrane. Its function is as follows. Multicopper oxidase that may play a role in the maintenance of inorganic phosphate homeostasis. In Oryza sativa subsp. japonica (Rice), this protein is Multicopper oxidase LPR1 homolog 5.